Here is a 242-residue protein sequence, read N- to C-terminus: Probable proteasome subunit alpha type-7 (242 aa).

Belongs to the peptidase T1A family. The 26S proteasome consists of a 20S proteasome core and two 19S regulatory subunits. The 20S proteasome core is composed of 28 subunits that are arranged in four stacked rings, resulting in a barrel-shaped structure. The two end rings are each formed by seven alpha subunits, and the two central rings are each formed by seven beta subunits. The catalytic chamber with the active sites is on the inside of the barrel.

It localises to the cytoplasm. It is found in the nucleus. Functionally, the proteasome degrades poly-ubiquitinated proteins in the cytoplasm and in the nucleus. It is essential for the regulated turnover of proteins and for the removal of misfolded proteins. The proteasome is a multicatalytic proteinase complex that is characterized by its ability to cleave peptides with Arg, Phe, Tyr, Leu, and Glu adjacent to the leaving group at neutral or slightly basic pH. It has an ATP-dependent proteolytic activity. This chain is Probable proteasome subunit alpha type-7 (PRE10), found in Encephalitozoon cuniculi (strain GB-M1) (Microsporidian parasite).